The sequence spans 242 residues: Tryptophan synthase alpha chain (242 aa).

Residues glutamate 32 and aspartate 43 each act as proton acceptor in the active site.

The protein belongs to the TrpA family. In terms of assembly, tetramer of two alpha and two beta chains.

Its subcellular location is the plastid. The protein localises to the chloroplast. It carries out the reaction (1S,2R)-1-C-(indol-3-yl)glycerol 3-phosphate + L-serine = D-glyceraldehyde 3-phosphate + L-tryptophan + H2O. It functions in the pathway amino-acid biosynthesis; L-tryptophan biosynthesis; L-tryptophan from chorismate: step 5/5. In terms of biological role, the alpha subunit is responsible for the aldol cleavage of indoleglycerol phosphate to indole and glyceraldehyde 3-phosphate. The polypeptide is Tryptophan synthase alpha chain (Cyanidium caldarium (Red alga)).